The primary structure comprises 181 residues: ATP synthase subunit b (181 aa).

The helical transmembrane segment at Leu-16 to Phe-36 threads the bilayer.

The protein belongs to the ATPase B chain family. As to quaternary structure, F-type ATPases have 2 components, F(1) - the catalytic core - and F(0) - the membrane proton channel. F(1) has five subunits: alpha(3), beta(3), gamma(1), delta(1), epsilon(1). F(0) has three main subunits: a(1), b(2) and c(10-14). The alpha and beta chains form an alternating ring which encloses part of the gamma chain. F(1) is attached to F(0) by a central stalk formed by the gamma and epsilon chains, while a peripheral stalk is formed by the delta and b chains.

The protein resides in the cell membrane. In terms of biological role, f(1)F(0) ATP synthase produces ATP from ADP in the presence of a proton or sodium gradient. F-type ATPases consist of two structural domains, F(1) containing the extramembraneous catalytic core and F(0) containing the membrane proton channel, linked together by a central stalk and a peripheral stalk. During catalysis, ATP synthesis in the catalytic domain of F(1) is coupled via a rotary mechanism of the central stalk subunits to proton translocation. Its function is as follows. Component of the F(0) channel, it forms part of the peripheral stalk, linking F(1) to F(0). The sequence is that of ATP synthase subunit b from Streptomyces lividans.